A 2670-amino-acid chain; its full sequence is Inositol 1,4,5-trisphosphate-gated calcium channel ITPR3 (2670 aa).

Topologically, residues 1–2233 (MNEMSSFLHI…YVEGASTGVL (2233 aa)) are cytoplasmic. MIR domains follow at residues 113-173 (GDVV…LRSN), 174-224 (GDNV…INLF), 232-288 (EEVL…VEVV), 295-372 (GGAG…LDPT), and 378-434 (DSFV…IVSV). The 1D-myo-inositol 1,4,5-trisphosphate site is built by arginine 266, leucine 269, and arginine 270. 1D-myo-inositol 1,4,5-trisphosphate is bound by residues arginine 503, lysine 507, arginine 510, tyrosine 567, arginine 568, and lysine 569. Arginine 743 contributes to the Ca(2+) binding site. Phosphoserine occurs at positions 916 and 934. Residues glutamate 1122 and glutamate 1125 each contribute to the Ca(2+) site. Positions 1138–1153 (EVEAGATKDKKERPSD) are enriched in basic and acidic residues. Disordered stretches follow at residues 1138–1164 (EVEA…HGEK) and 1807–1835 (NMSD…SFSM). Residues serine 1813, serine 1832, and serine 1834 each carry the phosphoserine modification. Ca(2+) contacts are provided by glutamate 1881 and glutamate 1945. ATP is bound by residues alanine 1995, glutamate 2148, and lysine 2151. The helical transmembrane segment at 2234–2254 (GSPLISLLFWILICFSIAALF) threads the bilayer. Topologically, residues 2255-2262 (TKRYSVRP) are extracellular. Residues 2263-2283 (LIVALILRSIYYLGIGPTLNI) form a helical membrane-spanning segment. Topologically, residues 2284-2292 (LGALNLTNK) are cytoplasmic. The helical transmembrane segment at 2293-2310 (IVFVVSFVGNRGTFIRGY) threads the bilayer. At 2311-2324 (KAMVMDMEFLYHVG) the chain is on the extracellular side. A helical membrane pass occupies residues 2325-2345 (YILTSVLGLFAHELFYSILLF). Topologically, residues 2346–2367 (DLIYREETLFNVIKSVTRNGRS) are cytoplasmic. Residues 2368–2388 (ILLTALLALILVYLFSIVGFL) form a helical membrane-spanning segment. At 2389–2495 (FLKDDFILEV…ESLFPARVVY (107 aa)) the chain is on the extracellular side. Cysteines 2454 and 2460 form a disulfide. The chain crosses the membrane as a helical span at residues 2496 to 2516 (DLLFFFIVIIIVLNLIFGVII). At 2517-2670 (DTFADLRSEK…FVDVQNCMSR (154 aa)) the chain is on the cytoplasmic side. The ATP site is built by cysteine 2537 and phenylalanine 2538. Cysteine 2537 provides a ligand contact to Zn(2+). Zn(2+) is bound by residues cysteine 2540 and histidine 2557. Lysine 2559, histidine 2562, asparagine 2563, and methionine 2564 together coordinate ATP. Histidine 2562 contributes to the Zn(2+) binding site. Threonine 2580 lines the Ca(2+) pocket. Phosphoserine occurs at positions 2608 and 2669.

Belongs to the InsP3 receptor family. As to quaternary structure, homodimer. Homotetramer. Interacts with TRPC1, TRPC3, TRPC4. Interacts with TRPV4. Interacts with SIGMAR1. Found in a complex with AKT1 and PML; this interaction modulates IP3R3-phosphorylation and in turn ITPR3-dependent calcium release. Interacts with IRAG2 (via coiled-coil domain). Interacts with CABP1. Interacts with TMBIM4/LFG4. Interacts with CEMIP. Interacts with TESPA1. Interacts with TMEM203. Interacts with BOK; regulates ITPR3 expression. Interacts with BCL2L10. Interacts with CHGA and CHGB. Phosphorylated by AKT1 on serine and/or threonine residues.

The protein localises to the endoplasmic reticulum membrane. It is found in the cytoplasmic vesicle. It localises to the secretory vesicle membrane. It carries out the reaction Ca(2+)(in) = Ca(2+)(out). With respect to regulation, inositol 1,4,5-trisphosphate-gated calcium channel is regulated by cytosolic calcium in a biphasic manner. At low concentrations, cytosolic calcium binds at a high-affinity juxtamembrane domain (JD) calcium binding site, allowing ITPR3 to activate by escaping a low-energy resting state through an ensemble of preactivated states. At high cytosolic calcium concentrations, ITPR3 preferentially enters an inhibited state stabilized by calcium binding at a second, low-affinity cytoplasmic domain (CD) calcium binding site. In terms of biological role, inositol 1,4,5-trisphosphate-gated calcium channel that, upon 1D-myo-inositol 1,4,5-trisphosphate binding, transports calcium from the endoplasmic reticulum lumen to cytoplasm, thus releasing the intracellular calcium and therefore participates in cellular calcium ion homeostasis. 1D-myo-inositol 1,4,5-trisphosphate binds to the ligand-free channel without altering its global conformation, yielding the low-energy resting state, then progresses through resting-to preactivated transitions to the higher energy preactivated state, which increases affinity for calcium, promoting binding of the low basal cytosolic calcium at the juxtamembrane domain (JD) site, favoring the transition through the ensemble of high-energy intermediate states along the trajectory to the fully-open activated state. Upon opening, releases calcium in the cytosol where it can bind to the low-affinity cytoplasmic domain (CD) site and stabilizes the inhibited state to terminate calcium release. This Mus musculus (Mouse) protein is Inositol 1,4,5-trisphosphate-gated calcium channel ITPR3.